A 287-amino-acid polypeptide reads, in one-letter code: 2' cyclic ADP-D-ribose synthase BtTIR (287 aa).

In terms of domain architecture, TIR spans 155 to 287 (KQYDFFISHA…DDIVENLKNL (133 aa)). Glu230 is an active-site residue.

Homodimer.

The enzyme catalyses NAD(+) = 2'cADPR + nicotinamide + H(+). NAD(+) hydrolase (NADase) that cleaves NAD(+) into nicotinamide and 2' cyclic ADP-D-ribose (2'cADPR). In Bacteroides thetaiotaomicron, this protein is 2' cyclic ADP-D-ribose synthase BtTIR.